The following is a 571-amino-acid chain: Proline--tRNA ligase (571 aa).

It belongs to the class-II aminoacyl-tRNA synthetase family. ProS type 1 subfamily. Homodimer.

It localises to the cytoplasm. The catalysed reaction is tRNA(Pro) + L-proline + ATP = L-prolyl-tRNA(Pro) + AMP + diphosphate. Catalyzes the attachment of proline to tRNA(Pro) in a two-step reaction: proline is first activated by ATP to form Pro-AMP and then transferred to the acceptor end of tRNA(Pro). As ProRS can inadvertently accommodate and process non-cognate amino acids such as alanine and cysteine, to avoid such errors it has two additional distinct editing activities against alanine. One activity is designated as 'pretransfer' editing and involves the tRNA(Pro)-independent hydrolysis of activated Ala-AMP. The other activity is designated 'posttransfer' editing and involves deacylation of mischarged Ala-tRNA(Pro). The misacylated Cys-tRNA(Pro) is not edited by ProRS. The polypeptide is Proline--tRNA ligase (Pseudomonas aeruginosa (strain LESB58)).